The following is a 618-amino-acid chain: Mitochondrial Rho GTPase 2 (618 aa).

Topologically, residues 1 to 591 (MKRDVRILLL…LNAVELGAAS (591 aa)) are cytoplasmic. The Miro 1 domain occupies 2–168 (KRDVRILLLG…FYYAQKAVLH (167 aa)). GTP-binding residues include glycine 16, lysine 17, threonine 18, and serine 19. Mg(2+) is bound at residue threonine 18. Residues proline 35 and aspartate 57 each coordinate Mg(2+). Residues serine 59, asparagine 118, lysine 119, aspartate 121, alanine 149, and lysine 150 each contribute to the GTP site. EF-hand domains follow at residues 184–219 (ACSRALTRIFNLSDQDNNQILSDDELNYFQKSCFGN) and 304–339 (LGYQFLQRLFEKHDKDQDGALSPAELQNFFSVFPCM). The Ca(2+) site is built by aspartate 197, aspartate 199, asparagine 201, glutamate 208, aspartate 317, aspartate 319, aspartate 321, and glutamate 328. In terms of domain architecture, Miro 2 spans 416–579 (RNVFLCKVLG…YTKLATAATF (164 aa)). The GTP site is built by glycine 428, glycine 430, lysine 431, serine 432, and alanine 433. Mg(2+) is bound at residue serine 432. Mg(2+) is bound at residue glutamate 474. GTP is bound by residues lysine 528, aspartate 530, and cysteine 559. A helical; Anchor for type IV membrane protein transmembrane segment spans residues 592–614 (FWLRVALGAAVTALVGFTLYRVL). Residues 615-618 (AKNK) are Mitochondrial intermembrane-facing.

Belongs to the mitochondrial Rho GTPase family. Homodimer.

Its subcellular location is the mitochondrion outer membrane. It catalyses the reaction GTP + H2O = GDP + phosphate + H(+). The catalysed reaction is ATP + H2O = ADP + phosphate + H(+). It carries out the reaction UTP + H2O = UDP + phosphate + H(+). Its function is as follows. Atypical mitochondrial nucleoside-triphosphatase (NTPase) involved in mitochondrial trafficking. Probably involved in control of anterograde transport of mitochondria and their subcellular distribution. Can hydrolyze GTP, ATP and UTP. The protein is Mitochondrial Rho GTPase 2 (RHOT2) of Gallus gallus (Chicken).